The chain runs to 214 residues: MKRTHLASFSNRDKTQEEEGEDGNGDNRVIMNHYKNYEAGLIPWPPKNYTCSFCRREFRSAQALGGHMNVHRRDRAKLRQIPSWLFEPHHHTPIANPNPNFSSSSSSSTTTAHLEPSLTNQRSKTTPFPSARFDLLDSTTSYGGLMMDREKNKSNVCSREIKKSAIDACHSVRCEISRGDLMNKKDDQVMGLELGMSLRNPNQVLDLELRLGYL.

The segment at 1 to 27 (MKRTHLASFSNRDKTQEEEGEDGNGDN) is disordered. The C2H2-type zinc-finger motif lies at 49-71 (YTCSFCRREFRSAQALGGHMNVH). Residues 72 to 79 (RRDRAKLR) carry the Nuclear localization signal motif. A disordered region spans residues 89-130 (HHHTPIANPNPNFSSSSSSSTTTAHLEPSLTNQRSKTTPFPS). The segment covering 102–111 (SSSSSSSTTT) has biased composition (low complexity). The span at 117–128 (SLTNQRSKTTPF) shows a compositional bias: polar residues.

Expressed in roots, stems, axillary buds and flowers.

It localises to the nucleus. Its function is as follows. Probable transcription factor that may regulate cell division and growth. This is Zinc finger protein 11 from Arabidopsis thaliana (Mouse-ear cress).